Reading from the N-terminus, the 184-residue chain is Inorganic pyrophosphatase (184 aa).

Substrate contacts are provided by lysine 19, arginine 33, and tyrosine 45. 3 residues coordinate Mg(2+): aspartate 55, aspartate 60, and aspartate 92. Residue tyrosine 129 coordinates substrate.

It belongs to the PPase family. Homohexamer. It depends on Mg(2+) as a cofactor.

It is found in the cytoplasm. The catalysed reaction is diphosphate + H2O = 2 phosphate + H(+). In terms of biological role, catalyzes the hydrolysis of inorganic pyrophosphate (PPi) forming two phosphate ions. This chain is Inorganic pyrophosphatase, found in Mycoplasma pneumoniae (strain ATCC 29342 / M129 / Subtype 1) (Mycoplasmoides pneumoniae).